The following is an 85-amino-acid chain: Large ribosomal subunit protein bL31B (85 aa).

Belongs to the bacterial ribosomal protein bL31 family. Type B subfamily. Part of the 50S ribosomal subunit.

The sequence is that of Large ribosomal subunit protein bL31B from Clavibacter sepedonicus (Clavibacter michiganensis subsp. sepedonicus).